Reading from the N-terminus, the 608-residue chain is Protein trichome birefringence (608 aa).

Residues 38-58 (TFAYAFVITFVSFTLFFAFSP) traverse the membrane as a helical; Signal-anchor for type II membrane protein segment. 2 stretches are compositionally biased toward polar residues: residues 101 to 137 (STKP…QTPA) and 145 to 203 (AKNT…TSPA). The segment at 101-236 (STKPTNRSSD…TPKKQTKTVD (136 aa)) is disordered. Low complexity predominate over residues 215-227 (TNSSSNSSTASST). Positions 328 to 330 (GDS) match the GDS motif motif. The DCXHWCLPGXXDXWN motif signature appears at 573-587 (DCSHWCLPGVPDSWN).

Belongs to the PC-esterase family. TBL subfamily. In terms of tissue distribution, expressed in leaf vasculature, growing part of the root, expanding inflorescence stems and trichomes.

It localises to the membrane. In terms of biological role, required during cellulose deposition. May act as a bridging protein that binds pectin and other cell wall polysaccharides. Probably involved in maintaining esterification of pectins. May be involved in the specific O-acetylation of cell wall polymers. The chain is Protein trichome birefringence (TBR) from Arabidopsis thaliana (Mouse-ear cress).